The following is a 512-amino-acid chain: Maturase K (512 aa).

It belongs to the intron maturase 2 family. MatK subfamily.

The protein resides in the plastid. It localises to the chloroplast. Usually encoded in the trnK tRNA gene intron. Probably assists in splicing its own and other chloroplast group II introns. The protein is Maturase K of Platanus occidentalis (Sycamore).